We begin with the raw amino-acid sequence, 427 residues long: Glutamate-1-semialdehyde 2,1-aminomutase (427 aa).

The residue at position 268 (Lys268) is an N6-(pyridoxal phosphate)lysine.

Belongs to the class-III pyridoxal-phosphate-dependent aminotransferase family. HemL subfamily. Pyridoxal 5'-phosphate serves as cofactor.

It is found in the cytoplasm. The catalysed reaction is (S)-4-amino-5-oxopentanoate = 5-aminolevulinate. It functions in the pathway porphyrin-containing compound metabolism; protoporphyrin-IX biosynthesis; 5-aminolevulinate from L-glutamyl-tRNA(Glu): step 2/2. The sequence is that of Glutamate-1-semialdehyde 2,1-aminomutase from Methanococcus maripaludis (strain DSM 14266 / JCM 13030 / NBRC 101832 / S2 / LL).